Reading from the N-terminus, the 362-residue chain is 3-dehydroquinate synthase (362 aa).

NAD(+) is bound by residues 74-79 (DGEEHK), 108-112 (GVTGD), 132-133 (TT), Lys145, and Lys154. Zn(2+) contacts are provided by Glu187, His250, and His267.

It belongs to the sugar phosphate cyclases superfamily. Dehydroquinate synthase family. Co(2+) is required as a cofactor. Zn(2+) serves as cofactor. The cofactor is NAD(+).

It localises to the cytoplasm. It carries out the reaction 7-phospho-2-dehydro-3-deoxy-D-arabino-heptonate = 3-dehydroquinate + phosphate. The protein operates within metabolic intermediate biosynthesis; chorismate biosynthesis; chorismate from D-erythrose 4-phosphate and phosphoenolpyruvate: step 2/7. Its function is as follows. Catalyzes the conversion of 3-deoxy-D-arabino-heptulosonate 7-phosphate (DAHP) to dehydroquinate (DHQ). In Syntrophotalea carbinolica (strain DSM 2380 / NBRC 103641 / GraBd1) (Pelobacter carbinolicus), this protein is 3-dehydroquinate synthase.